A 375-amino-acid polypeptide reads, in one-letter code: Growth/differentiation factor 8 (375 aa).

The first 18 residues, 1-18 (MQKLQIFVYIYLFMLLVA), serve as a signal peptide directing secretion. Positions 19–266 (GPVDLNENSE…VTDTPKRSRR (248 aa)) are excised as a propeptide. N-linked (GlcNAc...) asparagine glycosylation is found at N48 and N71. 4 cysteine pairs are disulfide-bonded: C272/C282, C281/C340, C309/C372, and C313/C374.

This sequence belongs to the TGF-beta family. In terms of assembly, homodimer; disulfide-linked. Interacts with WFIKKN2, leading to inhibit its activity. Interacts with FSTL3. Post-translationally, synthesized as large precursor molecule that undergoes proteolytic cleavage to generate an N-terminal propeptide and a disulfide linked C-terminal dimer, which is the biologically active molecule. The circulating form consists of a latent complex of the C-terminal dimer and other proteins, including its propeptide, which maintain the C-terminal dimer in a latent, inactive state. Ligand activation requires additional cleavage of the prodomain by a tolloid-like metalloproteinase.

The protein localises to the secreted. Acts specifically as a negative regulator of skeletal muscle growth. The chain is Growth/differentiation factor 8 (MSTN) from Capra ibex (Ibex).